The following is a 429-amino-acid chain: Adenylosuccinate synthetase (429 aa).

Residues 12–18 (GDEGKGK) and 40–42 (GHT) each bind GTP. The Proton acceptor role is filled by Asp13. Residues Asp13 and Gly40 each contribute to the Mg(2+) site. Residues 13–16 (DEGK), 38–41 (NAGH), Thr129, Arg143, Gln223, Thr238, and Arg302 contribute to the IMP site. His41 serves as the catalytic Proton donor. Residue 298 to 304 (VVTGRKR) coordinates substrate. GTP-binding positions include Arg304, 330–332 (KLD), and 412–414 (STS).

Belongs to the adenylosuccinate synthetase family. In terms of assembly, homodimer. The cofactor is Mg(2+).

Its subcellular location is the cytoplasm. It carries out the reaction IMP + L-aspartate + GTP = N(6)-(1,2-dicarboxyethyl)-AMP + GDP + phosphate + 2 H(+). It participates in purine metabolism; AMP biosynthesis via de novo pathway; AMP from IMP: step 1/2. Plays an important role in the de novo pathway of purine nucleotide biosynthesis. Catalyzes the first committed step in the biosynthesis of AMP from IMP. The chain is Adenylosuccinate synthetase from Bartonella tribocorum (strain CIP 105476 / IBS 506).